Reading from the N-terminus, the 87-residue chain is Large ribosomal subunit protein bL27 (87 aa).

Belongs to the bacterial ribosomal protein bL27 family.

The sequence is that of Large ribosomal subunit protein bL27 from Paenarthrobacter aurescens (strain TC1).